The chain runs to 448 residues: Methylenetetrahydrofolate--tRNA-(uracil-5-)-methyltransferase TrmFO (448 aa).

Position 13–18 (Gly13–Gly18) interacts with FAD.

This sequence belongs to the MnmG family. TrmFO subfamily. FAD is required as a cofactor.

It localises to the cytoplasm. The enzyme catalyses uridine(54) in tRNA + (6R)-5,10-methylene-5,6,7,8-tetrahydrofolate + NADH + H(+) = 5-methyluridine(54) in tRNA + (6S)-5,6,7,8-tetrahydrofolate + NAD(+). The catalysed reaction is uridine(54) in tRNA + (6R)-5,10-methylene-5,6,7,8-tetrahydrofolate + NADPH + H(+) = 5-methyluridine(54) in tRNA + (6S)-5,6,7,8-tetrahydrofolate + NADP(+). Its function is as follows. Catalyzes the folate-dependent formation of 5-methyl-uridine at position 54 (M-5-U54) in all tRNAs. This chain is Methylenetetrahydrofolate--tRNA-(uracil-5-)-methyltransferase TrmFO, found in Streptococcus pyogenes serotype M1.